The chain runs to 200 residues: Elongation factor Ts (200 aa).

Residues 83–86 (TDFA) are involved in Mg(2+) ion dislocation from EF-Tu.

The protein belongs to the EF-Ts family.

Its subcellular location is the cytoplasm. In terms of biological role, associates with the EF-Tu.GDP complex and induces the exchange of GDP to GTP. It remains bound to the aminoacyl-tRNA.EF-Tu.GTP complex up to the GTP hydrolysis stage on the ribosome. This Syntrophobacter fumaroxidans (strain DSM 10017 / MPOB) protein is Elongation factor Ts.